The chain runs to 94 residues: Large ribosomal subunit protein bL25 (94 aa).

The disordered stretch occupies residues 1–20 (MFKFNAEVRQSQGKGASRRL).

It belongs to the bacterial ribosomal protein bL25 family. As to quaternary structure, part of the 50S ribosomal subunit; part of the 5S rRNA/L5/L18/L25 subcomplex. Contacts the 5S rRNA. Binds to the 5S rRNA independently of L5 and L18.

Functionally, this is one of the proteins that binds to the 5S RNA in the ribosome where it forms part of the central protuberance. This Pasteurella multocida (strain Pm70) protein is Large ribosomal subunit protein bL25.